Here is a 275-residue protein sequence, read N- to C-terminus: uncharacterized protein (275 aa).

The protein localises to the virion. This is an uncharacterized protein from Acanthamoeba polyphaga (Amoeba).